We begin with the raw amino-acid sequence, 100 residues long: Vesicle-associated membrane protein 8 (100 aa).

The Cytoplasmic portion of the chain corresponds to 1-74; sequence MEASGSAGND…ARKFWWKNVK (74 aa). Phosphoserine is present on residues serine 4 and serine 17. The v-SNARE coiled-coil homology domain maps to 11 to 71; sequence RVRNLQSEVE…QKVARKFWWK (61 aa). 3 positions are modified to phosphothreonine: threonine 27, threonine 47, and threonine 53. At serine 54 the chain carries Phosphoserine. The helical; Anchor for type IV membrane protein transmembrane segment at 75–95 threads the bilayer; the sequence is MIVIICVIVLIILILIILFAT. Residues 96–100 are Vesicular-facing; that stretch reads GTIPT.

It belongs to the synaptobrevin family. In terms of assembly, forms a SNARE complex composed of VAMP8, SNAP29 and STX17 involved in fusion of autophagosome with lysosome. Found in a number of SNARE complexes with NAPA, SNAP23, SNAP25, STX1A, STX4, STX7, STX8 and VTI1B. Interacts with PICALM. SNARE complex formation and binding by PICALM are mutually exclusive processes for VAMP8. Interacts with SBF2/MTMR13. Interacts with RAB21 (in GTP-bound form) in response to starvation; the interaction probably regulates VAMP8 endolysosomal trafficking. Interacts with STX17; this interaction is increased in the absence of TMEM39A. Interacts with TRIM6. In terms of tissue distribution, expressed (at protein level) at a high level in kidney, lung and spleen; at a lower level in testis, liver, brain and heart. Expressed in kidney and retinal pigment epithelium derived cell line.

It is found in the lysosome membrane. Its subcellular location is the late endosome membrane. It localises to the early endosome membrane. The protein localises to the midbody. The protein resides in the cell membrane. It is found in the zymogen granule membrane. SNAREs, soluble N-ethylmaleimide-sensitive factor-attachment protein receptors, are essential proteins for fusion of cellular membranes. SNAREs localized on opposing membranes assemble to form a trans-SNARE complex, an extended, parallel four alpha-helical bundle that drives membrane fusion. VAMP8 is a SNARE involved in autophagy through the direct control of autophagosome membrane fusion with the lysososome membrane via its interaction with the STX17-SNAP29 binary t-SNARE complex. Also required for dense-granule secretion in platelets. Also plays a role in regulated enzyme secretion in pancreatic acinar cells. Involved in the abscission of the midbody during cell division, which leads to completely separate daughter cells. Involved in the homotypic fusion of early and late endosomes. Also participates in the activation of type I interferon antiviral response through a TRIM6-dependent mechanism. This Rattus norvegicus (Rat) protein is Vesicle-associated membrane protein 8.